Here is a 561-residue protein sequence, read N- to C-terminus: Putative transport protein YbjL (561 aa).

A run of 5 helical transmembrane segments spans residues 8–28, 32–52, 66–86, 94–114, and 158–178; these read LLNGNYILLLFVVLALGLCLG, LGSVQLGNSIGVLVVSLLLGQ, FMLFIFCVGVEAGPNFFSIFF, MLALVMVGSALLIALGLGKLF, and NLSLGYALTYLIGLVSLIVGA. RCK C-terminal domains follow at residues 200–288 and 292–373; these read RGLD…SLRN and VFDR…RIGF. The next 5 helical transmembrane spans lie at 383–403, 406–426, 447–467, 475–495, and 540–560; these read LLAFCAFFIIGLMIGMITFQF, FSFGIGNAAGLLFAGIMLGFL, FGLMVFMAGVGLSAGSGISNG, MLIAGLVVSLVPVVICFLFGA, and AIANVLLTLAGTLIVIIWPGL.

Belongs to the AAE transporter (TC 2.A.81) family. YbjL subfamily.

The protein localises to the cell membrane. The polypeptide is Putative transport protein YbjL (Salmonella gallinarum (strain 287/91 / NCTC 13346)).